The primary structure comprises 143 residues: Flagellar assembly factor FliW (143 aa).

It belongs to the FliW family. As to quaternary structure, interacts with translational regulator CsrA and flagellin(s).

The protein resides in the cytoplasm. Its function is as follows. Acts as an anti-CsrA protein, binds CsrA and prevents it from repressing translation of its target genes, one of which is flagellin. Binds to flagellin and participates in the assembly of the flagellum. This chain is Flagellar assembly factor FliW, found in Clostridium botulinum (strain Langeland / NCTC 10281 / Type F).